We begin with the raw amino-acid sequence, 574 residues long: Aspartate--tRNA ligase (574 aa).

Glu-169 lines the L-aspartate pocket. The interval 193–196 (QLFK) is aspartate. Arg-215 contacts L-aspartate. ATP is bound by residues 215 to 217 (RDE) and Gln-224. Residue His-437 coordinates L-aspartate. Position 471 (Glu-471) interacts with ATP. Arg-478 contributes to the L-aspartate binding site. An ATP-binding site is contributed by 523-526 (GLDR).

This sequence belongs to the class-II aminoacyl-tRNA synthetase family. Type 1 subfamily. As to quaternary structure, homodimer.

Its subcellular location is the cytoplasm. The catalysed reaction is tRNA(Asp) + L-aspartate + ATP = L-aspartyl-tRNA(Asp) + AMP + diphosphate. In terms of biological role, catalyzes the attachment of L-aspartate to tRNA(Asp) in a two-step reaction: L-aspartate is first activated by ATP to form Asp-AMP and then transferred to the acceptor end of tRNA(Asp). The chain is Aspartate--tRNA ligase from Mycoplasma mycoides subsp. mycoides SC (strain CCUG 32753 / NCTC 10114 / PG1).